A 474-amino-acid polypeptide reads, in one-letter code: tRNA-2-methylthio-N(6)-dimethylallyladenosine synthase (474 aa).

The MTTase N-terminal domain maps to 3–120 (QKLHIKTWGC…LPEMINQIRA (118 aa)). 6 residues coordinate [4Fe-4S] cluster: Cys12, Cys49, Cys83, Cys157, Cys161, and Cys164. The 233-residue stretch at 143–375 (KAEGPTAFVS…QQRINNQAAQ (233 aa)) folds into the Radical SAM core domain. One can recognise a TRAM domain in the interval 378–441 (RAMLGTEQRV…TNSLRGDVVR (64 aa)).

Belongs to the methylthiotransferase family. MiaB subfamily. As to quaternary structure, monomer. [4Fe-4S] cluster serves as cofactor.

It localises to the cytoplasm. It catalyses the reaction N(6)-dimethylallyladenosine(37) in tRNA + (sulfur carrier)-SH + AH2 + 2 S-adenosyl-L-methionine = 2-methylsulfanyl-N(6)-dimethylallyladenosine(37) in tRNA + (sulfur carrier)-H + 5'-deoxyadenosine + L-methionine + A + S-adenosyl-L-homocysteine + 2 H(+). Its function is as follows. Catalyzes the methylthiolation of N6-(dimethylallyl)adenosine (i(6)A), leading to the formation of 2-methylthio-N6-(dimethylallyl)adenosine (ms(2)i(6)A) at position 37 in tRNAs that read codons beginning with uridine. This is tRNA-2-methylthio-N(6)-dimethylallyladenosine synthase from Mannheimia succiniciproducens (strain KCTC 0769BP / MBEL55E).